Consider the following 154-residue polypeptide: Endoribonuclease YbeY (154 aa).

3 residues coordinate Zn(2+): His114, His118, and His124.

It belongs to the endoribonuclease YbeY family. Zn(2+) is required as a cofactor.

It is found in the cytoplasm. In terms of biological role, single strand-specific metallo-endoribonuclease involved in late-stage 70S ribosome quality control and in maturation of the 3' terminus of the 16S rRNA. The protein is Endoribonuclease YbeY of Haemophilus influenzae (strain 86-028NP).